Consider the following 732-residue polypeptide: 1,4-alpha-glucan branching enzyme GlgB 2 (732 aa).

D413 acts as the Nucleophile in catalysis. The active-site Proton donor is the E466.

This sequence belongs to the glycosyl hydrolase 13 family. GlgB subfamily. In terms of assembly, monomer.

The enzyme catalyses Transfers a segment of a (1-&gt;4)-alpha-D-glucan chain to a primary hydroxy group in a similar glucan chain.. It participates in glycan biosynthesis; glycogen biosynthesis. Its function is as follows. Catalyzes the formation of the alpha-1,6-glucosidic linkages in glycogen by scission of a 1,4-alpha-linked oligosaccharide from growing alpha-1,4-glucan chains and the subsequent attachment of the oligosaccharide to the alpha-1,6 position. This Rhizobium etli (strain ATCC 51251 / DSM 11541 / JCM 21823 / NBRC 15573 / CFN 42) protein is 1,4-alpha-glucan branching enzyme GlgB 2.